A 243-amino-acid polypeptide reads, in one-letter code: DNA repair protein RecO (243 aa).

Belongs to the RecO family.

Functionally, involved in DNA repair and RecF pathway recombination. The polypeptide is DNA repair protein RecO (Caulobacter sp. (strain K31)).